Consider the following 75-residue polypeptide: Small ribosomal subunit protein bS18 (75 aa).

It belongs to the bacterial ribosomal protein bS18 family. In terms of assembly, part of the 30S ribosomal subunit. Forms a tight heterodimer with protein bS6.

Its function is as follows. Binds as a heterodimer with protein bS6 to the central domain of the 16S rRNA, where it helps stabilize the platform of the 30S subunit. This chain is Small ribosomal subunit protein bS18, found in Shewanella denitrificans (strain OS217 / ATCC BAA-1090 / DSM 15013).